The following is a 247-amino-acid chain: ATP synthase subunit a, chloroplastic (247 aa).

Helical transmembrane passes span 38–58 (QVLI…VIAV), 95–115 (VPFI…GALL), 134–154 (INTT…AGLS), 199–219 (LVVV…VMFL), and 220–240 (GLFT…AYIG).

The protein belongs to the ATPase A chain family. As to quaternary structure, F-type ATPases have 2 components, CF(1) - the catalytic core - and CF(0) - the membrane proton channel. CF(1) has five subunits: alpha(3), beta(3), gamma(1), delta(1), epsilon(1). CF(0) has four main subunits: a, b, b' and c.

It localises to the plastid. The protein resides in the chloroplast thylakoid membrane. Functionally, key component of the proton channel; it plays a direct role in the translocation of protons across the membrane. This Agrostis stolonifera (Creeping bentgrass) protein is ATP synthase subunit a, chloroplastic.